The following is a 273-amino-acid chain: Ribosomal RNA small subunit methyltransferase A (273 aa).

S-adenosyl-L-methionine is bound by residues N23, I25, G50, E72, D97, and N116.

The protein belongs to the class I-like SAM-binding methyltransferase superfamily. rRNA adenine N(6)-methyltransferase family. RsmA subfamily.

The protein localises to the cytoplasm. The catalysed reaction is adenosine(1518)/adenosine(1519) in 16S rRNA + 4 S-adenosyl-L-methionine = N(6)-dimethyladenosine(1518)/N(6)-dimethyladenosine(1519) in 16S rRNA + 4 S-adenosyl-L-homocysteine + 4 H(+). Functionally, specifically dimethylates two adjacent adenosines (A1518 and A1519) in the loop of a conserved hairpin near the 3'-end of 16S rRNA in the 30S particle. May play a critical role in biogenesis of 30S subunits. The chain is Ribosomal RNA small subunit methyltransferase A from Rickettsia akari (strain Hartford).